The following is a 132-amino-acid chain: Vacuolar protein sorting-associated protein 55 homolog (132 aa).

Transmembrane regions (helical) follow at residues 7 to 27 (VAAL…GCAL), 32 to 52 (TWTP…LLIA), 68 to 88 (LALF…IVLA), and 98 to 118 (CFLV…YFYL).

The protein belongs to the OB-RGRP/VPS55 family.

It is found in the endosome membrane. Functionally, involved in endosomal protein transport. The polypeptide is Vacuolar protein sorting-associated protein 55 homolog (Caenorhabditis elegans).